Consider the following 189-residue polypeptide: Transcription factor FapR (189 aa).

The protein belongs to the FapR family.

Transcriptional factor involved in regulation of membrane lipid biosynthesis by repressing genes involved in fatty acid and phospholipid metabolism. The chain is Transcription factor FapR from Listeria innocua serovar 6a (strain ATCC BAA-680 / CLIP 11262).